The primary structure comprises 331 residues: Ribosomal RNA small subunit methyltransferase H (331 aa).

Residues glycine 38–tyrosine 40, aspartate 56, phenylalanine 83, aspartate 100, and glutamine 107 contribute to the S-adenosyl-L-methionine site. Residues threonine 308 to arginine 331 form a disordered region.

It belongs to the methyltransferase superfamily. RsmH family.

It is found in the cytoplasm. It catalyses the reaction cytidine(1402) in 16S rRNA + S-adenosyl-L-methionine = N(4)-methylcytidine(1402) in 16S rRNA + S-adenosyl-L-homocysteine + H(+). Functionally, specifically methylates the N4 position of cytidine in position 1402 (C1402) of 16S rRNA. The protein is Ribosomal RNA small subunit methyltransferase H of Cereibacter sphaeroides (strain ATCC 17025 / ATH 2.4.3) (Rhodobacter sphaeroides).